Reading from the N-terminus, the 269-residue chain is Proline-rich protein 7 (269 aa).

Over Met-1 to Thr-9 the chain is Extracellular. The tract at residues Met-1–Glu-44 is required for interaction with NMDA receptors. The interval Val-2–Lys-39 is required for membrane localization. A helical; Signal-anchor for type III membrane protein membrane pass occupies residues Phe-10–Phe-30. At Cys-31–Val-269 the chain is on the cytoplasmic side. 2 disordered regions span residues Gly-63–Leu-83 and Pro-97–Pro-121. A Phosphoserine modification is found at Ser-64. The segment covering Ala-108 to Leu-117 has biased composition (basic residues). Residues Pro-146 to Thr-166 are required for internalization. The segment at Pro-146–Val-269 is required for apoptosis induction. The PDZ-binding signature appears at Thr-267–Val-269.

As to quaternary structure, forms a complex with NMDA receptor zeta subunit GRIN1 and epsilon subunit GRIN2B. Interacts with GRIN2B. Interacts with GRIN1; the interaction is reduced upon NMDA receptor activity. Found in a postsynaptic membrane complex with DLG4 and GRIN1. Interacts with DLG4 (via PDZ3 domain and to lesser degree via PDZ2 domain). Interacts with JUN. Found in a complex with JUN and FBXW7. Interacts with JUN and FBXW7; the interaction inhibits ubiquitination-mediated JUN degradation promoting its phosphorylation and transcriptional activity. Interacts with SRC. Post-translationally, palmitoylated. Tyrosine phosphorylated, possibly by SRC. As to expression, highly expressed in brain, moderately expressed in lymph nodes and T cells and low expression in thymus and spleen. Expressed in single positive progenitor thymocytes, particularly in CD8 single positive thymocytes.

Its subcellular location is the cell membrane. The protein localises to the postsynaptic cell membrane. It localises to the postsynaptic density membrane. It is found in the cytoplasm. The protein resides in the perinuclear region. Its subcellular location is the synapse. The protein localises to the cell projection. It localises to the dendrite. It is found in the nucleus. In terms of biological role, acts as a synapse-to-nucleus messenger to promote NMDA receptor-mediated excitotoxicity in neurons in a JUN-dependent manner. Inhibits ubiquitination-mediated degradation and promotes phosphorylation and transcriptional activity of transcription factor JUN. Might play a redundant role in the regulation of T cell receptor signaling. Might promote apoptosis in T cells. The protein is Proline-rich protein 7 (Prr7) of Mus musculus (Mouse).